We begin with the raw amino-acid sequence, 209 residues long: Small ribosomal subunit protein uS3 (209 aa).

Residues 17–86 enclose the KH type-2 domain; that stretch reads IDEFLEKELR…NPQIEVEEIK (70 aa).

Belongs to the universal ribosomal protein uS3 family. In terms of assembly, part of the 30S ribosomal subunit.

In terms of biological role, binds the lower part of the 30S subunit head. The polypeptide is Small ribosomal subunit protein uS3 (Thermococcus kodakarensis (strain ATCC BAA-918 / JCM 12380 / KOD1) (Pyrococcus kodakaraensis (strain KOD1))).